The following is a 120-amino-acid chain: Spermidine export protein MdtJ (120 aa).

4 helical membrane-spanning segments follow: residues 1–21 (MFYWILLALAIVAEITGTLSM), 31–51 (TGFILMLVMISLSYIFLSFAV), 54–74 (IALGVAYALWEGIGILLITLF), and 81–101 (EALSTMKIAGLATLVVGIVLI).

The protein belongs to the drug/metabolite transporter (DMT) superfamily. Small multidrug resistance (SMR) (TC 2.A.7.1) family. MdtJ subfamily. Forms a complex with MdtI.

It localises to the cell inner membrane. In terms of biological role, catalyzes the excretion of spermidine. The protein is Spermidine export protein MdtJ of Enterobacter sp. (strain 638).